The sequence spans 260 residues: NH(3)-dependent NAD(+) synthetase (260 aa).

31-38 (GLSGGLDS) is a binding site for ATP. Asp37 contacts Mg(2+). Residue Arg112 coordinates deamido-NAD(+). Thr132 lines the ATP pocket. Glu137 is a binding site for Mg(2+). Residues Lys161 and Ser183 each contribute to the ATP site.

It belongs to the NAD synthetase family. In terms of assembly, homodimer.

The enzyme catalyses deamido-NAD(+) + NH4(+) + ATP = AMP + diphosphate + NAD(+) + H(+). It functions in the pathway cofactor biosynthesis; NAD(+) biosynthesis; NAD(+) from deamido-NAD(+) (ammonia route): step 1/1. Catalyzes the ATP-dependent amidation of deamido-NAD to form NAD. Uses ammonia as a nitrogen source. This is NH(3)-dependent NAD(+) synthetase from Helicobacter pylori (strain J99 / ATCC 700824) (Campylobacter pylori J99).